The sequence spans 567 residues: uncharacterized protein (567 aa).

10 helical membrane-spanning segments follow: residues 65 to 85 (LSLF…PSVA), 92 to 112 (LWYV…FFLI), 190 to 210 (WQWF…ACLP), 220 to 240 (VATY…LAYG), 302 to 322 (AIVM…IIVA), 353 to 373 (LGIL…ALIA), 412 to 432 (IISI…DAVF), 434 to 454 (VGAV…VFFT), 473 to 493 (IGLL…FPSV), and 503 to 523 (WTCL…AISA).

It belongs to the amino acid-polyamine-organocation (APC) superfamily.

It is found in the membrane. This is an uncharacterized protein from Schizosaccharomyces pombe (strain 972 / ATCC 24843) (Fission yeast).